We begin with the raw amino-acid sequence, 545 residues long: Esterase-5C (545 aa).

The first 19 residues, 1–19 (MLAARLIILLSFYWLSASA), serve as a signal peptide directing secretion. A disulfide bond links Cys84 and Cys103. An N-linked (GlcNAc...) asparagine glycan is attached at Asn113. Residue Ser207 is the Acyl-ester intermediate of the active site. Cys259 and Cys271 are disulfide-bonded. N-linked (GlcNAc...) asparagine glycosylation occurs at Asn421. The active-site Charge relay system is the His467. Residue Asn507 is glycosylated (N-linked (GlcNAc...) asparagine). A disulfide bridge connects residues Cys515 and Cys536.

It belongs to the type-B carboxylesterase/lipase family.

Its subcellular location is the secreted. The catalysed reaction is a carboxylic ester + H2O = an alcohol + a carboxylate + H(+). The chain is Esterase-5C (Est-5C) from Drosophila miranda (Fruit fly).